The chain runs to 122 residues: Large ribosomal subunit protein uL18 (122 aa).

Belongs to the universal ribosomal protein uL18 family. In terms of assembly, part of the 50S ribosomal subunit; part of the 5S rRNA/L5/L18/L25 subcomplex. Contacts the 5S and 23S rRNAs.

Its function is as follows. This is one of the proteins that bind and probably mediate the attachment of the 5S RNA into the large ribosomal subunit, where it forms part of the central protuberance. This Desulfatibacillum aliphaticivorans protein is Large ribosomal subunit protein uL18.